A 542-amino-acid chain; its full sequence is Phosphoenolpyruvate carboxykinase (ATP) (542 aa).

Residues Arg-67, Tyr-208, and Lys-214 each contribute to the substrate site. ATP-binding positions include Lys-214, His-233, and 249–257; that span reads GLSGTGKTT. The Mn(2+) site is built by Lys-214 and His-233. Residue Asp-270 participates in Mn(2+) binding. ATP-binding positions include Glu-298, Arg-334, 450–451, and Thr-456; that span reads RI. Arg-334 is a binding site for substrate.

This sequence belongs to the phosphoenolpyruvate carboxykinase (ATP) family. As to quaternary structure, monomer. Mn(2+) is required as a cofactor.

Its subcellular location is the cytoplasm. It carries out the reaction oxaloacetate + ATP = phosphoenolpyruvate + ADP + CO2. It participates in carbohydrate biosynthesis; gluconeogenesis. In terms of biological role, involved in the gluconeogenesis. Catalyzes the conversion of oxaloacetate (OAA) to phosphoenolpyruvate (PEP) through direct phosphoryl transfer between the nucleoside triphosphate and OAA. In Vibrio campbellii (strain ATCC BAA-1116), this protein is Phosphoenolpyruvate carboxykinase (ATP).